The chain runs to 1118 residues: Ubiquitin carboxyl-terminal hydrolase 8 (1118 aa).

An MIT domain is found at 33–116 (TKSYVHSALK…ESLKLRYEEA (84 aa)). Composition is skewed to basic and acidic residues over residues 120–146 (KKLE…REDG) and 158–177 (LDSK…KCET). A disordered region spans residues 120–177 (KKLEEKDRQEEAQRLQQKRQETGREDGGTLAKGSLENVLDSKDKTQKSNGEKNEKCET). A Phosphoserine modification is found at serine 160. One can recognise a Rhodanese domain in the interval 195–313 (KNISLIIMDA…WLLCYPQYTT (119 aa)). A phosphoserine mark is found at serine 392 and serine 400. The disordered stretch occupies residues 402–447 (KNVPQIDRTKKPAVKLPEEHRIKSESTNHEQQSPQSGKVIPDRSTK). An SH3-binding motif is present at residues 405–413 (PQIDRTKKP). The segment covering 417-429 (LPEEHRIKSESTN) has biased composition (basic and acidic residues). Phosphoserine is present on serine 452. The segment covering 475 to 573 (KNKQEKELRE…AKKSVEDRGK (99 aa)) has biased composition (basic and acidic residues). 2 disordered regions span residues 475–648 (KNKQ…GRIV) and 679–746 (YPPE…ENKP). Threonine 577 carries the phosphothreonine modification. A compositionally biased stretch (basic and acidic residues) spans 618 to 645 (TFREDTDDTERNKAQREPLTRARSEEMG). Residues 716–726 (SYSSPDITQAI) show a composition bias toward polar residues. Residues serine 718 and serine 719 each carry the phosphoserine modification. The USP domain maps to 777–1109 (TGLRNLGNTC…AAYILFYTSL (333 aa)). Cysteine 786 functions as the Nucleophile in the catalytic mechanism. The residue at position 945 (threonine 945) is a Phosphothreonine. The active-site Proton acceptor is histidine 1067.

The protein belongs to the peptidase C19 family. In terms of assembly, forms a ternary complex with RNF128 and OTUB1. Interacts (via C-terminal UCH catalytic domain) with OTUB1 isoform 1. Interacts with STAM2 (via SH3 domain). Interacts with DNAJB3, EGFR, EPS15, RASGRF1, RNF41, YWHAE, YWHAG and YWHAZ. Interacts with NBR1, RASGRF1, RNF41 and IST1. Associates with the ESCRT-0 complex and with microtubules. Interacts with BIRC6/bruce and KIF23/MKLP1. (Microbial infection) Interacts with Zika virus non-structural protein 1. Post-translationally, phosphorylation of Ser-718 is essential for interaction with YWHAE and for cytosol localization. Undergoes dephosphorylation at Ser-718 in the M phase. Tyrosine-phosphorylated in its N-terminal half in an EGFR-dependent manner. In terms of processing, ubiquitinated. Inactive form is mostly monoubiquitinated, but polyubiquitination happens too. Ubiquitination is increased in EGF-stimulated cells. Ubiquitination of active form is undetectable, suggesting a possibility that USP8 deubiquitinates itself, thereby regulating its own function.

The protein localises to the cytoplasm. It is found in the nucleus. It localises to the endosome membrane. Its subcellular location is the cell membrane. The enzyme catalyses Thiol-dependent hydrolysis of ester, thioester, amide, peptide and isopeptide bonds formed by the C-terminal Gly of ubiquitin (a 76-residue protein attached to proteins as an intracellular targeting signal).. Hydrolase that can remove conjugated ubiquitin from proteins and therefore plays an important regulatory role at the level of protein turnover by preventing degradation. Converts both 'Lys-48' an 'Lys-63'-linked ubiquitin chains. Catalytic activity is enhanced in the M phase. Involved in cell proliferation. Required to enter into S phase in response to serum stimulation. May regulate T-cell anergy mediated by RNF128 via the formation of a complex containing RNF128 and OTUB1. Probably regulates the stability of STAM2 and RASGRF1. Regulates endosomal ubiquitin dynamics, cargo sorting, membrane traffic at early endosomes, and maintenance of ESCRT-0 stability. The level of protein ubiquitination on endosomes is essential for maintaining the morphology of the organelle. Deubiquitinates EPS15 and controls tyrosine kinase stability. Removes conjugated ubiquitin from EGFR thus regulating EGFR degradation and downstream MAPK signaling. Involved in acrosome biogenesis through interaction with the spermatid ESCRT-0 complex and microtubules. Deubiquitinates BIRC6/bruce and KIF23/MKLP1. Deubiquitinates BACE1 which inhibits BACE1 lysosomal degradation and modulates BACE-mediated APP cleavage and amyloid-beta formation. The protein is Ubiquitin carboxyl-terminal hydrolase 8 of Homo sapiens (Human).